Here is a 689-residue protein sequence, read N- to C-terminus: DNA polymerase epsilon subunit B (689 aa).

Basic and acidic residues predominate over residues 98–115 (EWSHEHPIQHEENILGRT). The interval 98–155 (EWSHEHPIQHEENILGRTDDDENNSDDEMPIAADSSLQNVSLSSPMRQPTERDEYKQP) is disordered. A compositionally biased stretch (acidic residues) spans 116-126 (DDDENNSDDEM). At Ser122 the chain carries Phosphoserine. Positions 132-144 (SSLQNVSLSSPMR) are enriched in polar residues. Residue Ser141 is modified to Phosphoserine; by CDC28. Residues 146–155 (PTERDEYKQP) are compositionally biased toward basic and acidic residues. Ser613 carries the post-translational modification Phosphoserine.

Belongs to the DNA polymerase epsilon subunit B family. In terms of assembly, DNA polymerase epsilon is a heterotetramer consisting of POL2, DPB2, DPB3 and DPB4. Phosphorylated in a cell cycle dependent manner during late G1 phase. Phosphorylation may facilitate the interaction with POL2 or the activity of DNA polymerase II. Phosphorylation is independent of DNA replication but dependent upon CDC28 in vivo. Both Ser-141 and Ser-613 are phosphorylated in vivo, but in vitro only Ser-141 is phosphorylated by CDC28.

The protein resides in the cytoplasm. It localises to the nucleus. Its function is as follows. As accessory component of the DNA polymerase epsilon complex participates in chromosomal DNA replication. It is required during synthesis of the leading and lagging DNA strands at the replication fork and binds at/or near replication origins and moves along DNA with the replication fork. It has 3'-5' proofreading exonuclease activity that correct errors arising during DNA replication. It is also involved in DNA synthesis during DNA repair. The polypeptide is DNA polymerase epsilon subunit B (DPB2) (Saccharomyces cerevisiae (strain ATCC 204508 / S288c) (Baker's yeast)).